Reading from the N-terminus, the 496-residue chain is Probable uroporphyrinogen-III C-methyltransferase (496 aa).

This sequence belongs to the precorrin methyltransferase family.

The catalysed reaction is uroporphyrinogen III + 2 S-adenosyl-L-methionine = precorrin-2 + 2 S-adenosyl-L-homocysteine + H(+). Functionally, siroheme synthase involved in methionine biosynthesis. The chain is Probable uroporphyrinogen-III C-methyltransferase from Schizosaccharomyces pombe (strain 972 / ATCC 24843) (Fission yeast).